The following is a 286-amino-acid chain: Pantothenate synthetase (286 aa).

30-37 (MGNLHSGH) serves as a coordination point for ATP. The active-site Proton donor is the H37. A (R)-pantoate-binding site is contributed by Q61. Residue Q61 coordinates beta-alanine. 149–152 (GQKD) is a binding site for ATP. Q155 provides a ligand contact to (R)-pantoate. Residues V178 and 186-189 (LSSR) each bind ATP.

It belongs to the pantothenate synthetase family. Homodimer.

It localises to the cytoplasm. It catalyses the reaction (R)-pantoate + beta-alanine + ATP = (R)-pantothenate + AMP + diphosphate + H(+). Its pathway is cofactor biosynthesis; (R)-pantothenate biosynthesis; (R)-pantothenate from (R)-pantoate and beta-alanine: step 1/1. Functionally, catalyzes the condensation of pantoate with beta-alanine in an ATP-dependent reaction via a pantoyl-adenylate intermediate. The protein is Pantothenate synthetase of Pseudomonas fluorescens (strain Pf0-1).